The following is a 351-amino-acid chain: Dysbindin (351 aa).

Serine 11 is modified (phosphoserine). Positions 88-181 form a coiled coil; sequence EKKKTSLVEL…ELDAEHAQKV (94 aa). The dysbindin stretch occupies residues 173–331; it reads LDAEHAQKVL…DEEEVQVDTA (159 aa). The Nuclear export signal motif lies at 243-256; the sequence is LMDISDQEALDVFL. The segment at 286–351 is disordered; sequence PNPSELRAKP…TPDGGEDSDS (66 aa). Residues 296–305 show a composition bias toward polar residues; sequence PSSSSTCTDS. Phosphoserine occurs at positions 316, 321, and 349.

This sequence belongs to the dysbindin family. As to quaternary structure, interacts (via its coiled coil domain) with KXD1. Interacts with CMYA5, PI4K2 and RNF151. Component of the biogenesis of lysosome-related organelles complex 1 (BLOC-1) composed of at least BLOC1S1, BLOC1S2, BLOC1S3, BLOC1S4, BLOC1S5, BLOC1S6, DTNBP1/BLOC1S7 and SNAPIN/BLOC1S8. Interacts directly in the complex with BLOC1S5, BLOC1S6 and SNAPIN/BLOC1S8. The BLOC-1 complex associates with the AP-3 protein complex and membrane protein cargos. This BLOC-1 complex also associates with the BLOC-2 complex in endosomes. Binds to DTNA and DTNB but may not be a physiological binding partner. Interacts (isoform 1 and isoform 2 only) with the DNA-dependent protein kinase complex DNA-PK; the interaction phosphorylates DTNBP1 in vitro. Interacts directly in this complex with XRCC5 and XRCC6. Interacts with AP3M1, AP3B2 and TRIM32. Interacts with XPO1; the interaction exports DTNBP1 out of the nucleus. Post-translationally, ubiquitinated by TRIM32. Ubiquitination leads to DTNBP1 degradation. In terms of processing, isoforms 1 and 2 highly phosphorylated by PRKDC in vitro. Isoform 3 only weakly phosphorylated by PRKDC in vitro. Detected in brain, in neurons and in neuropil. Isoform 1 is expressed in the cerebral cortex, and hippocampal frontal (HF). Specific expression in the posterior half of the superior temporal gyrus (pSTG). Higher expression of isoform 2 and 3 in the HF than in the pSTG while isoform 1 shows no difference in expression in these areas. In the HF, detected in dentate gyrus (DG) and in pyramidal cells of hippocampus CA2 and CA3 (at protein level). Expressed in all principal neuronal populations of the HF, namely pyramidal neurons in the subiculum and CA1-3, granule cells in the dense cell layer of the DG (DGg), and polymorph cells in the hilus of the DG (DGh). Maximal levels in CA2, CA3, and DGh. Isoform 2 not expressed in the cerebral cortex.

It is found in the cytoplasm. Its subcellular location is the cytoplasmic vesicle membrane. The protein resides in the endosome membrane. The protein localises to the melanosome membrane. It localises to the postsynaptic density. It is found in the endoplasmic reticulum. Its subcellular location is the nucleus. The protein resides in the cytoplasmic vesicle. The protein localises to the secretory vesicle. It localises to the synaptic vesicle membrane. It is found in the postsynaptic cell membrane. In terms of biological role, component of the BLOC-1 complex, a complex that is required for normal biogenesis of lysosome-related organelles (LRO), such as platelet dense granules and melanosomes. In concert with the AP-3 complex, the BLOC-1 complex is required to target membrane protein cargos into vesicles assembled at cell bodies for delivery into neurites and nerve terminals. The BLOC-1 complex, in association with SNARE proteins, is also proposed to be involved in neurite extension. Associates with the BLOC-2 complex to facilitate the transport of TYRP1 independent of AP-3 function. Plays a role in synaptic vesicle trafficking and in neurotransmitter release. Plays a role in the regulation of cell surface exposure of DRD2. May play a role in actin cytoskeleton reorganization and neurite outgrowth. May modulate MAPK8 phosphorylation. Appears to promote neuronal transmission and viability through regulating the expression of SNAP25 and SYN1, modulating PI3-kinase-Akt signaling and influencing glutamatergic release. Regulates the expression of SYN1 through binding to its promoter. Modulates prefrontal cortical activity via the dopamine/D2 pathway. The chain is Dysbindin (DTNBP1) from Homo sapiens (Human).